A 256-amino-acid chain; its full sequence is Protein N-terminal and lysine N-methyltransferase EFM7 (256 aa).

Residues 1–26 form a disordered region; sequence MSDTESLNDALGLFDEPEDFRPEKPK. S-adenosyl-L-methionine is bound by residues Trp-64, 90 to 92, Asp-112, Trp-145, and Ser-168; that span reads GAA.

It belongs to the class I-like SAM-binding methyltransferase superfamily. EFM7 family.

Its subcellular location is the cytoplasm. S-adenosyl-L-methionine-dependent protein methyltransferase that trimethylates the N-terminal glycine 'Gly-2' of elongation factor 1-alpha, before also catalyzing the mono- and dimethylation of 'Lys-3'. The sequence is that of Protein N-terminal and lysine N-methyltransferase EFM7 from Candida glabrata (strain ATCC 2001 / BCRC 20586 / JCM 3761 / NBRC 0622 / NRRL Y-65 / CBS 138) (Yeast).